A 370-amino-acid chain; its full sequence is Cysteine synthase 1 (370 aa).

A mitochondrion-targeting transit peptide spans 1-16 (MFRQSVRRFATAALRS). Residue Lys-73 is modified to N6-(pyridoxal phosphate)lysine. Pyridoxal 5'-phosphate-binding positions include Asn-103, 209 to 213 (GTGGT), and Ser-308.

This sequence belongs to the cysteine synthase/cystathionine beta-synthase family. The cofactor is pyridoxal 5'-phosphate.

The protein resides in the mitochondrion. The enzyme catalyses O-succinyl-L-serine + hydrogen sulfide = L-cysteine + succinate. It carries out the reaction O-acetyl-L-serine + hydrogen sulfide = L-cysteine + acetate. The protein operates within amino-acid biosynthesis; L-cysteine biosynthesis; L-cysteine from L-serine: step 2/2. In terms of biological role, catalyzes the conversion of O-succinyl-L-serine into cysteine, the last step in the cysteine biosynthesis pathway. Can also use O-acetyl-L-serine. The sequence is that of Cysteine synthase 1 from Emericella nidulans (strain FGSC A4 / ATCC 38163 / CBS 112.46 / NRRL 194 / M139) (Aspergillus nidulans).